We begin with the raw amino-acid sequence, 102 residues long: Putative septation protein SpoVG (102 aa).

Residues 83–102 are disordered; that stretch reads TDEVIPDKNATSDNEESDEA.

Belongs to the SpoVG family.

In terms of biological role, could be involved in septation. This is Putative septation protein SpoVG from Staphylococcus epidermidis (strain ATCC 35984 / DSM 28319 / BCRC 17069 / CCUG 31568 / BM 3577 / RP62A).